The following is a 97-amino-acid chain: Osteocalcin (97 aa).

Residues 1 to 18 (MKTLAILVLCSLAAICLT) form the signal peptide. Residues 19–52 (SSASAGAQPAGDSPVQGGLFMEKDQASAVVRQTR) constitute a propeptide that is removed on maturation. The Gla domain occupies 53–93 (AAKELTLAQTESLREVCETNMACDEMADAQGIVAAYQAFYG). The Ca(2+) site is built by Glu63, Glu67, Glu70, and Asp76. Residues Glu63, Glu67, and Glu70 each carry the 4-carboxyglutamate modification. Cys69 and Cys75 are joined by a disulfide. A 4-carboxyglutamate modification is found at Glu77.

The protein belongs to the osteocalcin/matrix Gla protein family. Post-translationally, gamma-carboxyglutamate residues are formed by vitamin K dependent carboxylation by GGCX. These residues are essential for the binding of calcium. As to expression, in the branchial arches, BGP is found outside the chondrocyte-containing zone. It is found in some cells in the basal zone of the branchial filaments, near the branchial arches, and within the extracellular matrix in the medial zone. In the vertebra, BGP is found in the mineralized bone matrix.

The protein resides in the secreted. Its function is as follows. The carboxylated form is one of the main organic components of the bone matrix, which constitutes 1-2% of the total bone protein. The carboxylated form binds strongly to apatite and calcium. The protein is Osteocalcin (bglap) of Argyrosomus regius (Meagre).